Here is a 370-residue protein sequence, read N- to C-terminus: Putative agmatine deiminase (370 aa).

Cys361 serves as the catalytic Amidino-cysteine intermediate.

It belongs to the agmatine deiminase family.

It carries out the reaction agmatine + H2O = N-carbamoylputrescine + NH4(+). In Shewanella baltica (strain OS195), this protein is Putative agmatine deiminase.